A 193-amino-acid polypeptide reads, in one-letter code: NADH-quinone oxidoreductase subunit B (193 aa).

Positions 72, 73, 137, and 167 each coordinate [4Fe-4S] cluster.

This sequence belongs to the complex I 20 kDa subunit family. In terms of assembly, NDH-1 is composed of 14 different subunits. Subunits NuoB, C, D, E, F, and G constitute the peripheral sector of the complex. [4Fe-4S] cluster is required as a cofactor.

Its subcellular location is the cell inner membrane. It catalyses the reaction a quinone + NADH + 5 H(+)(in) = a quinol + NAD(+) + 4 H(+)(out). NDH-1 shuttles electrons from NADH, via FMN and iron-sulfur (Fe-S) centers, to quinones in the respiratory chain. The immediate electron acceptor for the enzyme in this species is believed to be ubiquinone. Couples the redox reaction to proton translocation (for every two electrons transferred, four hydrogen ions are translocated across the cytoplasmic membrane), and thus conserves the redox energy in a proton gradient. This is NADH-quinone oxidoreductase subunit B from Phenylobacterium zucineum (strain HLK1).